A 267-amino-acid chain; its full sequence is Thiazole synthase (267 aa).

Lysine 110 (schiff-base intermediate with DXP) is an active-site residue. 1-deoxy-D-xylulose 5-phosphate contacts are provided by residues glycine 171, alanine 197 to glycine 198, and asparagine 219 to threonine 220.

It belongs to the ThiG family. In terms of assembly, homotetramer. Forms heterodimers with either ThiH or ThiS.

It is found in the cytoplasm. It carries out the reaction [ThiS sulfur-carrier protein]-C-terminal-Gly-aminoethanethioate + 2-iminoacetate + 1-deoxy-D-xylulose 5-phosphate = [ThiS sulfur-carrier protein]-C-terminal Gly-Gly + 2-[(2R,5Z)-2-carboxy-4-methylthiazol-5(2H)-ylidene]ethyl phosphate + 2 H2O + H(+). The protein operates within cofactor biosynthesis; thiamine diphosphate biosynthesis. Functionally, catalyzes the rearrangement of 1-deoxy-D-xylulose 5-phosphate (DXP) to produce the thiazole phosphate moiety of thiamine. Sulfur is provided by the thiocarboxylate moiety of the carrier protein ThiS. In vitro, sulfur can be provided by H(2)S. This is Thiazole synthase from Maricaulis maris (strain MCS10) (Caulobacter maris).